Here is a 249-residue protein sequence, read N- to C-terminus: Beta-crystallin B1 (249 aa).

The segment at 1–49 is disordered; the sequence is MSQPAVKASATAAVNPGPDGKGKGAPPPGPAPGSGPAQAPAQPMPAAKG. Residue Ser2 is modified to N-acetylserine. Residues 2–55 are N-terminal arm; that stretch reads SQPAVKASATAAVNPGPDGKGKGAPPPGPAPGSGPAQAPAQPMPAAKGDLPPGS. Low complexity predominate over residues 34 to 49; it reads SGPAQAPAQPMPAAKG. Beta/gamma crystallin 'Greek key' domains follow at residues 56–95 and 96–140; these read YKLV…IVTS and GPWV…RPIR. Positions 141–145 are connecting peptide; it reads MDAQE. 2 Beta/gamma crystallin 'Greek key' domains span residues 146–187 and 188–230; these read HKLC…RVSS and GTWV…RRLR. Positions 232–249 are C-terminal arm; sequence RQWHREGCFPVLAAEPPK.

Belongs to the beta/gamma-crystallin family. In terms of assembly, homo/heterodimer, or complexes of higher-order. The structure of beta-crystallin oligomers seems to be stabilized through interactions between the N-terminal arms. In terms of processing, specific cleavages in the N-terminal arm occur during lens maturation and give rise to truncated forms, leading to impaired oligomerization and protein insolubilization.

Crystallins are the dominant structural components of the vertebrate eye lens. This Sus scrofa (Pig) protein is Beta-crystallin B1 (CRYBB1).